We begin with the raw amino-acid sequence, 332 residues long: Tryptophan--tRNA ligase (332 aa).

Residues 11 to 13 and 19 to 20 contribute to the ATP site; these read QPS and GN. Residues 12 to 20 carry the 'HIGH' region motif; it reads PSGELTIGN. Position 135 (D135) interacts with L-tryptophan. ATP contacts are provided by residues 147 to 149, V186, and 195 to 199; these read GQD and KMSKS. A 'KMSKS' region motif is present at residues 195-199; it reads KMSKS.

It belongs to the class-I aminoacyl-tRNA synthetase family. In terms of assembly, homodimer.

The protein localises to the cytoplasm. The catalysed reaction is tRNA(Trp) + L-tryptophan + ATP = L-tryptophyl-tRNA(Trp) + AMP + diphosphate + H(+). Catalyzes the attachment of tryptophan to tRNA(Trp). The sequence is that of Tryptophan--tRNA ligase from Shewanella oneidensis (strain ATCC 700550 / JCM 31522 / CIP 106686 / LMG 19005 / NCIMB 14063 / MR-1).